Consider the following 308-residue polypeptide: Dihydroorotate dehydrogenase A (fumarate) (308 aa).

Residues Ser24 and 48–49 (KS) each bind FMN. Substrate-binding positions include Lys48, 72-76 (NANGL), and Asn132. Asn132 serves as a coordination point for FMN. Cys135 acts as the Nucleophile in catalysis. Lys171 and Ile197 together coordinate FMN. Residue 198–199 (NT) participates in substrate binding. FMN is bound by residues Gly223 and 249–250 (GG).

It belongs to the dihydroorotate dehydrogenase family. Type 1 subfamily. In terms of assembly, homodimer. FMN serves as cofactor.

The protein localises to the cytoplasm. It catalyses the reaction (S)-dihydroorotate + fumarate = orotate + succinate. Its pathway is pyrimidine metabolism; UMP biosynthesis via de novo pathway. Catalyzes the conversion of dihydroorotate to orotate with fumarate as the electron acceptor. This chain is Dihydroorotate dehydrogenase A (fumarate) (pyrD), found in Limosilactobacillus reuteri (strain DSM 20016) (Lactobacillus reuteri).